The chain runs to 122 residues: Succinate dehydrogenase assembly factor 3, mitochondrial (122 aa).

The transit peptide at 1-47 directs the protein to the mitochondrion; it reads MHPSVVRLVKPRRPERITSPILPPLPLYRAILRAHHRKLPQELRYLG.

The protein belongs to the complex I LYR family. SDHAF3 subfamily. As to quaternary structure, interacts with the iron-sulfur protein subunit within the SDH catalytic dimer.

The protein resides in the mitochondrion matrix. Plays an essential role in the assembly of succinate dehydrogenase (SDH), an enzyme complex (also referred to as respiratory complex II) that is a component of both the tricarboxylic acid (TCA) cycle and the mitochondrial electron transport chain, and which couples the oxidation of succinate to fumarate with the reduction of ubiquinone (coenzyme Q) to ubiquinol. Promotes maturation of the iron-sulfur protein subunit of the SDH catalytic dimer, protecting it from the deleterious effects of oxidants. May act together with SDHAF1. The protein is Succinate dehydrogenase assembly factor 3, mitochondrial of Candida albicans (strain SC5314 / ATCC MYA-2876) (Yeast).